The sequence spans 311 residues: Methionyl-tRNA formyltransferase (311 aa).

114 to 117 (SLLP) serves as a coordination point for (6S)-5,6,7,8-tetrahydrofolate.

The protein belongs to the Fmt family.

It catalyses the reaction L-methionyl-tRNA(fMet) + (6R)-10-formyltetrahydrofolate = N-formyl-L-methionyl-tRNA(fMet) + (6S)-5,6,7,8-tetrahydrofolate + H(+). Attaches a formyl group to the free amino group of methionyl-tRNA(fMet). The formyl group appears to play a dual role in the initiator identity of N-formylmethionyl-tRNA by promoting its recognition by IF2 and preventing the misappropriation of this tRNA by the elongation apparatus. In Corynebacterium diphtheriae (strain ATCC 700971 / NCTC 13129 / Biotype gravis), this protein is Methionyl-tRNA formyltransferase.